The primary structure comprises 339 residues: Anthranilate phosphoribosyltransferase (339 aa).

5-phospho-alpha-D-ribose 1-diphosphate contacts are provided by residues Gly82, 85–86 (GD), Thr90, 92–95 (NIST), and 110–118 (KHGNRAVSS). Anthranilate is bound at residue Gly82. Mg(2+) is bound at residue Ser94. Anthranilate is bound by residues Asn113 and Arg168. Asp227 and Glu228 together coordinate Mg(2+).

Belongs to the anthranilate phosphoribosyltransferase family. As to quaternary structure, homodimer. Requires Mg(2+) as cofactor.

It carries out the reaction N-(5-phospho-beta-D-ribosyl)anthranilate + diphosphate = 5-phospho-alpha-D-ribose 1-diphosphate + anthranilate. Its pathway is amino-acid biosynthesis; L-tryptophan biosynthesis; L-tryptophan from chorismate: step 2/5. In terms of biological role, catalyzes the transfer of the phosphoribosyl group of 5-phosphorylribose-1-pyrophosphate (PRPP) to anthranilate to yield N-(5'-phosphoribosyl)-anthranilate (PRA). The sequence is that of Anthranilate phosphoribosyltransferase from Clostridium beijerinckii (strain ATCC 51743 / NCIMB 8052) (Clostridium acetobutylicum).